The sequence spans 751 residues: Phosphoribosylformylglycinamidine synthase subunit PurL (751 aa).

Residue H54 is part of the active site. Residues Y57 and K106 each coordinate ATP. Position 108 (E108) interacts with Mg(2+). Substrate is bound by residues 109 to 112 (SHNH) and R131. The active-site Proton acceptor is H110. D132 serves as a coordination point for Mg(2+). Q256 lines the substrate pocket. D284 lines the Mg(2+) pocket. 328–330 (ESQ) provides a ligand contact to substrate. ATP-binding residues include D516 and G553. N554 serves as a coordination point for Mg(2+). S556 serves as a coordination point for substrate.

Belongs to the FGAMS family. As to quaternary structure, monomer. Part of the FGAM synthase complex composed of 1 PurL, 1 PurQ and 2 PurS subunits.

It localises to the cytoplasm. The catalysed reaction is N(2)-formyl-N(1)-(5-phospho-beta-D-ribosyl)glycinamide + L-glutamine + ATP + H2O = 2-formamido-N(1)-(5-O-phospho-beta-D-ribosyl)acetamidine + L-glutamate + ADP + phosphate + H(+). Its pathway is purine metabolism; IMP biosynthesis via de novo pathway; 5-amino-1-(5-phospho-D-ribosyl)imidazole from N(2)-formyl-N(1)-(5-phospho-D-ribosyl)glycinamide: step 1/2. Its function is as follows. Part of the phosphoribosylformylglycinamidine synthase complex involved in the purines biosynthetic pathway. Catalyzes the ATP-dependent conversion of formylglycinamide ribonucleotide (FGAR) and glutamine to yield formylglycinamidine ribonucleotide (FGAM) and glutamate. The FGAM synthase complex is composed of three subunits. PurQ produces an ammonia molecule by converting glutamine to glutamate. PurL transfers the ammonia molecule to FGAR to form FGAM in an ATP-dependent manner. PurS interacts with PurQ and PurL and is thought to assist in the transfer of the ammonia molecule from PurQ to PurL. The sequence is that of Phosphoribosylformylglycinamidine synthase subunit PurL from Nocardioides sp. (strain ATCC BAA-499 / JS614).